The primary structure comprises 390 residues: S-adenosylmethionine synthase 2 (390 aa).

Glu9 serves as a coordination point for Mg(2+). His15 provides a ligand contact to ATP. Glu43 lines the K(+) pocket. Positions 56 and 99 each coordinate L-methionine. ATP is bound by residues 167-169 (DGK), 235-238 (SGRF), Asp246, 252-253 (RK), Ala269, Lys273, and Lys277. L-methionine is bound at residue Asp246. Residue Lys277 coordinates L-methionine.

It belongs to the AdoMet synthase family. Homotetramer. The cofactor is Mn(2+). It depends on Mg(2+) as a cofactor. Requires Co(2+) as cofactor. K(+) serves as cofactor.

It is found in the cytoplasm. The enzyme catalyses L-methionine + ATP + H2O = S-adenosyl-L-methionine + phosphate + diphosphate. The protein operates within amino-acid biosynthesis; S-adenosyl-L-methionine biosynthesis; S-adenosyl-L-methionine from L-methionine: step 1/1. Functionally, catalyzes the formation of S-adenosylmethionine from methionine and ATP. The reaction comprises two steps that are both catalyzed by the same enzyme: formation of S-adenosylmethionine (AdoMet) and triphosphate, and subsequent hydrolysis of the triphosphate. In Solanum tuberosum (Potato), this protein is S-adenosylmethionine synthase 2 (METK2).